Here is a 654-residue protein sequence, read N- to C-terminus: Chaperone protein HtpG (654 aa).

The a; substrate-binding stretch occupies residues 1-344 (MTVENAPQRE…SDDLPLNVSR (344 aa)). The b stretch occupies residues 345 to 556 (ELLQDSQVVR…EGGSPAYLER (212 aa)). The tract at residues 557–654 (LLQQRGRGAG…AQTPASATAS (98 aa)) is c.

Belongs to the heat shock protein 90 family. Homodimer.

The protein localises to the cytoplasm. Molecular chaperone. Has ATPase activity. The polypeptide is Chaperone protein HtpG (Myxococcus xanthus (strain DK1622)).